We begin with the raw amino-acid sequence, 94 residues long: Evasin P1104 (94 aa).

The first 28 residues, 1–28 (MASNLFTIFQLAGFVAIVFIVNLHSVSA), serve as a signal peptide directing secretion. 3 cysteine pairs are disulfide-bonded: C48-C66, C52-C68, and C62-C79. N51 carries N-linked (GlcNAc...) asparagine glycosylation.

Its subcellular location is the secreted. Its function is as follows. Salivary chemokine-binding protein which binds to host chemokines CXCL1, CXCL2, CXCL3, CXCL5, CXCL6, CXCL12 and CXCL13. The polypeptide is Evasin P1104 (Ixodes ricinus (Common tick)).